The sequence spans 147 residues: Spermidine export protein MdtJ (147 aa).

4 consecutive transmembrane segments (helical) span residues 1-21 (MIYW…TLSM), 31-51 (TGHI…SLAV), 54-74 (VALG…ITIF), and 81-101 (ETLS…ILLV). Residues 105–147 (TRKPKQPNCHRGNRPPSVQELKTQTTGHHKGVAVESGEHHAAA) are disordered.

This sequence belongs to the drug/metabolite transporter (DMT) superfamily. Small multidrug resistance (SMR) (TC 2.A.7.1) family. MdtJ subfamily. As to quaternary structure, forms a complex with MdtI.

The protein resides in the cell inner membrane. Functionally, catalyzes the excretion of spermidine. In Yersinia pestis bv. Antiqua (strain Antiqua), this protein is Spermidine export protein MdtJ.